A 187-amino-acid chain; its full sequence is Protein GrpE (187 aa).

The tract at residues 1–23 (MNNEKELKKEETSVENKEKKVAT) is disordered.

The protein belongs to the GrpE family. Homodimer.

The protein resides in the cytoplasm. Functionally, participates actively in the response to hyperosmotic and heat shock by preventing the aggregation of stress-denatured proteins, in association with DnaK and GrpE. It is the nucleotide exchange factor for DnaK and may function as a thermosensor. Unfolded proteins bind initially to DnaJ; upon interaction with the DnaJ-bound protein, DnaK hydrolyzes its bound ATP, resulting in the formation of a stable complex. GrpE releases ADP from DnaK; ATP binding to DnaK triggers the release of the substrate protein, thus completing the reaction cycle. Several rounds of ATP-dependent interactions between DnaJ, DnaK and GrpE are required for fully efficient folding. The sequence is that of Protein GrpE from Mesoplasma florum (strain ATCC 33453 / NBRC 100688 / NCTC 11704 / L1) (Acholeplasma florum).